We begin with the raw amino-acid sequence, 428 residues long: Bacteriochlorophyll synthase 44.5 kDa chain (428 aa).

Helical transmembrane passes span 3-23 (LGWLQIFRLGLVQLCIGAVVV), 32-52 (LMVVELALPAVLPGALVALHY), 73-93 (FFVILGMAVLALGAFLAAVAV), 115-135 (GFGVGASGTSLLALLASATEP), 144-164 (ITWLLMIFGIAVTAGTVGHFL), 172-192 (LLWIVAIVTLGAVVLTTLAVW), 225-245 (AFTFFLFLSMTAYFLQELILE), 269-289 (GVFFGMLTVGLALSGLKIGSL), 291-311 (GWVVTGCLGSSLALMAIVALG), 317-337 (ALVPAVIGLGFFNGIFAVAAI), 358-378 (LWGAAQAIAAGFGGLVGAGAA), and 393-413 (LVFGAQALLFIVAAMMATGVV).

Belongs to the PucC family.

Its subcellular location is the membrane. It participates in porphyrin-containing compound metabolism; bacteriochlorophyll biosynthesis (light-independent). This Rhodobacter capsulatus (strain ATCC BAA-309 / NBRC 16581 / SB1003) protein is Bacteriochlorophyll synthase 44.5 kDa chain.